Reading from the N-terminus, the 548-residue chain is 1,3-beta-glucanosyltransferase gel4 (548 aa).

A signal peptide spans methionine 1–alanine 25. Residues asparagine 51 and asparagine 69 are each glycosylated (N-linked (GlcNAc...) asparagine). A disulfide bridge connects residues cysteine 88 and cysteine 117. Residues tyrosine 106, serine 133–arginine 141, asparagine 174, and glutamate 175 each bind (1,3-beta-D-glucosyl)n. Glutamate 175 functions as the Proton donor in the catalytic mechanism. N-linked (GlcNAc...) asparagine glycosylation occurs at asparagine 181. The (1,3-beta-D-glucosyl)n site is built by aspartate 217 and arginine 222. 5 cysteine pairs are disulfide-bonded: cysteine 231–cysteine 364, cysteine 249–cysteine 280, cysteine 386–cysteine 437, cysteine 395–cysteine 461, and cysteine 414–cysteine 419. Glutamate 277 (nucleophile) is an active-site residue. Tyrosine 309 contributes to the (1,3-beta-D-glucosyl)n binding site. The N-linked (GlcNAc...) asparagine glycan is linked to asparagine 425. Alanine 519 carries the GPI-like-anchor amidated alanine lipid modification. Positions serine 520 to leucine 548 are cleaved as a propeptide — removed in mature form.

Belongs to the glycosyl hydrolase 72 family. In terms of processing, the GPI-like anchor contains a phosphoceramide lipid group.

It localises to the cell membrane. Functionally, splits internally a 1,3-beta-glucan molecule and transfers the newly generated reducing end (the donor) to the non-reducing end of another 1,3-beta-glucan molecule (the acceptor) forming a 1,3-beta linkage, resulting in the elongation of 1,3-beta-glucan chains in the cell wall. Involved in cell wall morphogenesis. The chain is 1,3-beta-glucanosyltransferase gel4 (gel4) from Aspergillus fumigatus (strain ATCC MYA-4609 / CBS 101355 / FGSC A1100 / Af293) (Neosartorya fumigata).